Here is a 420-residue protein sequence, read N- to C-terminus: Tyrosine--tRNA ligase (420 aa).

Tyr-38 is a binding site for L-tyrosine. The 'HIGH' region signature appears at 43–52 (PTGDSLHIGH). Residues Tyr-169 and Gln-173 each coordinate L-tyrosine. The short motif at 231–235 (KFGKS) is the 'KMSKS' region element. Residue Lys-234 participates in ATP binding. The S4 RNA-binding domain occupies 353 to 419 (KNLVDFLVDT…GKRKYTLVTI (67 aa)).

It belongs to the class-I aminoacyl-tRNA synthetase family. TyrS type 1 subfamily. Homodimer.

Its subcellular location is the cytoplasm. The catalysed reaction is tRNA(Tyr) + L-tyrosine + ATP = L-tyrosyl-tRNA(Tyr) + AMP + diphosphate + H(+). Functionally, catalyzes the attachment of tyrosine to tRNA(Tyr) in a two-step reaction: tyrosine is first activated by ATP to form Tyr-AMP and then transferred to the acceptor end of tRNA(Tyr). This chain is Tyrosine--tRNA ligase, found in Lactobacillus helveticus (strain DPC 4571).